The primary structure comprises 98 residues: DNA-binding protein Fis (98 aa).

Positions 74–93 (QTRAALMMGINRGTLRKKLK) form a DNA-binding region, H-T-H motif.

Belongs to the transcriptional regulatory Fis family. As to quaternary structure, homodimer.

Activates ribosomal RNA transcription. Plays a direct role in upstream activation of rRNA promoters. This is DNA-binding protein Fis from Enterobacter sp. (strain 638).